A 681-amino-acid polypeptide reads, in one-letter code: Pseudohemocyanin-2 (681 aa).

Positions 1–21 (VLLCSLVAATAAWPYFGGFQR) are cleaved as a signal peptide. Residues asparagine 98, asparagine 191, asparagine 228, and asparagine 624 are each glycosylated (N-linked (GlcNAc...) asparagine).

Belongs to the tyrosinase family. Hemocyanin subfamily. As to quaternary structure, hexamer. In terms of tissue distribution, strongly expressed in ovaries. Also expressed in heart. Not detected in hepatopancreas, gills, connective tissue or muscle.

In terms of biological role, does not function as a hemocyanin. The sequence is that of Pseudohemocyanin-2 from Homarus americanus (American lobster).